Reading from the N-terminus, the 296-residue chain is Cytidine deaminase (296 aa).

CMP/dCMP-type deaminase domains lie at 47–167 and 186–296; these read AESE…FGPS and DSSD…LDPE. 88-90 is a binding site for substrate; the sequence is NME. Zn(2+) is bound at residue His-101. Glu-103 serves as the catalytic Proton donor. Zn(2+) contacts are provided by Cys-128 and Cys-131.

The protein belongs to the cytidine and deoxycytidylate deaminase family. In terms of assembly, homodimer. The cofactor is Zn(2+).

It catalyses the reaction cytidine + H2O + H(+) = uridine + NH4(+). The enzyme catalyses 2'-deoxycytidine + H2O + H(+) = 2'-deoxyuridine + NH4(+). Functionally, this enzyme scavenges exogenous and endogenous cytidine and 2'-deoxycytidine for UMP synthesis. The chain is Cytidine deaminase from Shewanella sediminis (strain HAW-EB3).